The chain runs to 293 residues: Sodium-type flagellar protein MotY (293 aa).

The signal sequence occupies residues 1–21 (MNKWLITSGVMLSLLSANSYA). One can recognise an OmpA-like domain in the interval 175 to 292 (YSFEDIAFTI…RVVISLGRTQ (118 aa)).

It is found in the cell membrane. In terms of biological role, may play the role of a stator in the sodium flagellar motor, stabilizing the force-generating unit through direct interaction with the cell wall. This Vibrio parahaemolyticus serotype O3:K6 (strain RIMD 2210633) protein is Sodium-type flagellar protein MotY.